We begin with the raw amino-acid sequence, 234 residues long: tRNA (guanine-N(1)-)-methyltransferase (234 aa).

S-adenosyl-L-methionine contacts are provided by residues Gly112 and 132–137 (IGDFIL).

The protein belongs to the RNA methyltransferase TrmD family. Homodimer.

It is found in the cytoplasm. It catalyses the reaction guanosine(37) in tRNA + S-adenosyl-L-methionine = N(1)-methylguanosine(37) in tRNA + S-adenosyl-L-homocysteine + H(+). In terms of biological role, specifically methylates guanosine-37 in various tRNAs. In Campylobacter jejuni subsp. doylei (strain ATCC BAA-1458 / RM4099 / 269.97), this protein is tRNA (guanine-N(1)-)-methyltransferase.